The following is a 138-amino-acid chain: Large ribosomal subunit protein uL14 (138 aa).

It belongs to the universal ribosomal protein uL14 family. As to quaternary structure, part of the 50S ribosomal subunit. Forms a cluster with proteins L3 and L24e, part of which may contact the 16S rRNA in 2 intersubunit bridges. Contacts initiation factor aIF-6.

It is found in the cytoplasm. Its function is as follows. Binds to 23S rRNA. Forms part of two intersubunit bridges in the 70S ribosome. In Saccharolobus solfataricus (strain ATCC 35092 / DSM 1617 / JCM 11322 / P2) (Sulfolobus solfataricus), this protein is Large ribosomal subunit protein uL14.